The sequence spans 324 residues: Beta-ketoacyl-[acyl-carrier-protein] synthase III (324 aa).

Catalysis depends on residues C114 and H246. Positions Q247–R251 are ACP-binding. N276 is a catalytic residue.

This sequence belongs to the thiolase-like superfamily. FabH family. In terms of assembly, homodimer.

It is found in the cytoplasm. It carries out the reaction malonyl-[ACP] + acetyl-CoA + H(+) = 3-oxobutanoyl-[ACP] + CO2 + CoA. It functions in the pathway lipid metabolism; fatty acid biosynthesis. Catalyzes the condensation reaction of fatty acid synthesis by the addition to an acyl acceptor of two carbons from malonyl-ACP. Catalyzes the first condensation reaction which initiates fatty acid synthesis and may therefore play a role in governing the total rate of fatty acid production. Possesses both acetoacetyl-ACP synthase and acetyl transacylase activities. Its substrate specificity determines the biosynthesis of branched-chain and/or straight-chain of fatty acids. The chain is Beta-ketoacyl-[acyl-carrier-protein] synthase III from Campylobacter jejuni subsp. jejuni serotype O:2 (strain ATCC 700819 / NCTC 11168).